Here is a 278-residue protein sequence, read N- to C-terminus: MYSSSSVSKRFVLVPIVVVVTTQLLLVRNVSSLNLTNSYLHHKCVVNQGKYKPGSKYEKSLDDIIQSFSNKDKDSYGFRTGYSMKAYGKEPDMVSITYQCRIDSRGPKCQSCVVTAGYELLRKRCPRYKEAIIWYDQCLVEFSSLDTSGQINYDDNFCMPSAKNLIGNSISLEERLHLLNNLTKIAVTKIDKNIEGIKKPVLYAAGEKRLGTKSLYGMVQCSADLSVQGCNECMLYYIVHFQECWENKQGVRVLSRSCNFRYELYPFINPKGPYYTKF.

A signal peptide spans 1 to 32; it reads MYSSSSVSKRFVLVPIVVVVTTQLLLVRNVSS. Gnk2-homologous domains are found at residues 39 to 147 and 160 to 267; these read YLHH…SLDT and PSAK…LYPF.

Belongs to the cysteine-rich repeat secretory protein family.

It localises to the secreted. This chain is Cysteine-rich repeat secretory protein 18 (CRRSP18), found in Arabidopsis thaliana (Mouse-ear cress).